Here is a 187-residue protein sequence, read N- to C-terminus: UPF0301 protein BCI_0481 (187 aa).

It belongs to the UPF0301 (AlgH) family.

This Baumannia cicadellinicola subsp. Homalodisca coagulata protein is UPF0301 protein BCI_0481.